The primary structure comprises 1759 residues: Replicase polyprotein (1759 aa).

The 68-residue stretch at 23-90 (DKISTLKMVA…ARQMLLLLSG (68 aa)) folds into the DRBM domain. Residues 113–140 (YTRLEKAIERRDDKIKTLIKELRRQIKN) adopt a coiled-coil conformation. The SF3 helicase domain maps to 421 to 595 (AKQLYEYVSC…KEYGIETEKG (175 aa)). An ATP-binding site is contributed by 449–456 (GESGVGKT). One can recognise a Peptidase C3 domain in the interval 950–1191 (DAAHNLMIDV…YACPLTQECL (242 aa)). Catalysis depends on for picornain 3C-like protease activity residues His994, Asp1054, and Cys1152. Residues 1483–1622 (SHVIAGDFGN…NIDAKVVEWF (140 aa)) form the RdRp catalytic domain.

In terms of processing, protein 1A might be expressed through a ribosomal skip from one codon to the next without formation of a peptide bond.

The enzyme catalyses RNA(n) + a ribonucleoside 5'-triphosphate = RNA(n+1) + diphosphate. Protein 1A functions as a suppressor of RNA-mediated gene silencing, an antiviral defense mechanism of insect cells. Binds to long dsRNA and to a lesser extent, to siRNA. In terms of biological role, RNA-directed RNA polymerase replicates genomic and antigenomic RNA. This is Replicase polyprotein from Drosophila C virus (strain EB) (DCV).